Here is a 580-residue protein sequence, read N- to C-terminus: MDYPKMDYFLDVESAHRLLDVESAQRFFYSQGAQARRATLLLPPTLMAASSEDDIDRRPIRRVRSKSDTPYLAEARISFNLGAAEEVERLAAMRSDSLVPGTHTPPIRRRSKFANLGRIFKPWKWRKKKSEKFKHTSAALERKISMRQSREELIKRGVLKEIYDKDGELSISNEDDSLENGQSLSSSQLSLPALSEMEPVPMPRDPCSYEVLQASDIMDGPDPGAPVKLPCLPVKLSPPLPPKKVLICMPVGGPELTLASYAAQKSSQQAVAQHHHTVLPSQMQHQLQYGSHGQHLPSSTGTLPMHPSGCRMIDELNKTLAMTMQRLESSEQRVPCSTSYHSSGLHSSDGITKAGPMGLPEIRQVPTVVIECDDNKENVPHEPDYEDSPCLYGREEEEEEEDEDDDASLYTSSLAMKVCRKDSLAIKLSNRPSKRELEEKNILPRQTDEERLELRQQIGTKLTRRLSQRPTAEELEQRNILKPRNEQEEQEEKREIKRRLTRKLSQRPTVEELRERKILIRFSDYVEVADAQDYDRRADKPWTRLTAADKAAIRKELNEFKSTEMEVHELSRHLTRFHRP.

Residues serine 67 and serine 78 each carry the phosphoserine modification. Threonine 104 is modified (phosphothreonine). Residues 108-129 (RRRSKFANLGRIFKPWKWRKKK) carry the Nuclear localization signal motif. The stretch at 138–163 (AALERKISMRQSREELIKRGVLKEIY) is one RPEL 1 repeat. Disordered stretches follow at residues 330–350 (SEQRVPCSTSYHSSGLHSSDG) and 374–408 (DNKENVPHEPDYEDSPCLYGREEEEEEEDEDDDAS). A compositionally biased stretch (low complexity) spans 337–348 (STSYHSSGLHSS). Over residues 374-383 (DNKENVPHEP) the composition is skewed to basic and acidic residues. Acidic residues predominate over residues 395–407 (EEEEEEEDEDDDA). 3 RPEL repeats span residues 422 to 447 (DSLAIKLSNRPSKRELEEKNILPRQT), 460 to 485 (TKLTRRLSQRPTAEELEQRNILKPRN), and 498 to 523 (RRLTRKLSQRPTVEELRERKILIRFS). The segment at 463–494 (TRRLSQRPTAEELEQRNILKPRNEQEEQEEKR) is disordered. The residue at position 467 (serine 467) is a Phosphoserine. The span at 471–494 (TAEELEQRNILKPRNEQEEQEEKR) shows a compositional bias: basic and acidic residues. Serine 505 is subject to Phosphoserine.

It belongs to the phosphatase and actin regulator family. Interacts (via RPEL repeats) with ACTA1 and PPP1CA; ACTA1 and PPP1CA compete for the same binding site.

The protein resides in the cytoplasm. Its subcellular location is the synapse. It is found in the nucleus. In terms of biological role, binds actin monomers (G actin) and plays a role in multiple processes including the regulation of actin cytoskeleton dynamics, actin stress fibers formation, cell motility and survival, formation of tubules by endothelial cells, and regulation of PPP1CA activity. Involved in the regulation of cortical neuron migration and dendrite arborization. This Mus musculus (Mouse) protein is Phosphatase and actin regulator 1 (Phactr1).